The primary structure comprises 610 residues: UvrABC system protein C (610 aa).

The GIY-YIG domain maps to 16-94 (SQPGVYRMYD…IKLYQPRYNV (79 aa)). The region spanning 204-239 (DQVINQLVSRMEQASQNLAFEEAARLRDQIQAVRRV) is the UVR domain.

The protein belongs to the UvrC family. Interacts with UvrB in an incision complex.

It localises to the cytoplasm. The UvrABC repair system catalyzes the recognition and processing of DNA lesions. UvrC both incises the 5' and 3' sides of the lesion. The N-terminal half is responsible for the 3' incision and the C-terminal half is responsible for the 5' incision. The protein is UvrABC system protein C of Cronobacter sakazakii (strain ATCC BAA-894) (Enterobacter sakazakii).